The sequence spans 318 residues: Thymidylate synthase (318 aa).

Residues Arg-25 and 180 to 181 (RR) each bind dUMP. Cys-200 functions as the Nucleophile in the catalytic mechanism. DUMP contacts are provided by residues 220–223 (RSGD), Asn-231, and 261–263 (HIY). Asp-223 serves as a coordination point for (6R)-5,10-methylene-5,6,7,8-tetrahydrofolate. Ala-317 contributes to the (6R)-5,10-methylene-5,6,7,8-tetrahydrofolate binding site.

The protein belongs to the thymidylate synthase family. Bacterial-type ThyA subfamily. As to quaternary structure, homodimer.

The protein resides in the cytoplasm. It catalyses the reaction dUMP + (6R)-5,10-methylene-5,6,7,8-tetrahydrofolate = 7,8-dihydrofolate + dTMP. Its pathway is pyrimidine metabolism; dTTP biosynthesis. Its function is as follows. Catalyzes the reductive methylation of 2'-deoxyuridine-5'-monophosphate (dUMP) to 2'-deoxythymidine-5'-monophosphate (dTMP) while utilizing 5,10-methylenetetrahydrofolate (mTHF) as the methyl donor and reductant in the reaction, yielding dihydrofolate (DHF) as a by-product. This enzymatic reaction provides an intracellular de novo source of dTMP, an essential precursor for DNA biosynthesis. The polypeptide is Thymidylate synthase (Lactobacillus helveticus (strain DPC 4571)).